A 173-amino-acid polypeptide reads, in one-letter code: Shikimate kinase (173 aa).

Residue 14–19 (GAGKST) participates in ATP binding. Ser18 provides a ligand contact to Mg(2+). Residues Asp36, Arg60, and Gly82 each contribute to the substrate site. Arg120 lines the ATP pocket. Arg140 is a binding site for substrate. Gln157 is an ATP binding site.

The protein belongs to the shikimate kinase family. In terms of assembly, monomer. Mg(2+) is required as a cofactor.

It is found in the cytoplasm. It carries out the reaction shikimate + ATP = 3-phosphoshikimate + ADP + H(+). It functions in the pathway metabolic intermediate biosynthesis; chorismate biosynthesis; chorismate from D-erythrose 4-phosphate and phosphoenolpyruvate: step 5/7. Catalyzes the specific phosphorylation of the 3-hydroxyl group of shikimic acid using ATP as a cosubstrate. The sequence is that of Shikimate kinase from Buchnera aphidicola subsp. Schizaphis graminum (strain Sg).